We begin with the raw amino-acid sequence, 390 residues long: Glucose-fructose oxidoreductase domain-containing protein 1 (390 aa).

Positions 1–21 (MLPGVGVFGTSLTARVIIPLL) are cleaved as a signal peptide.

It belongs to the Gfo/Idh/MocA family. As to quaternary structure, homodimer. Interacts with NKIRAS2.

It localises to the secreted. Probably catalytically inactive enzyme. Does not bind NAD or NADP. The chain is Glucose-fructose oxidoreductase domain-containing protein 1 (Gfod1) from Mus musculus (Mouse).